The following is a 319-amino-acid chain: tRNA pseudouridine synthase B (319 aa).

Residue aspartate 47 is the Nucleophile of the active site.

This sequence belongs to the pseudouridine synthase TruB family. Type 1 subfamily.

The catalysed reaction is uridine(55) in tRNA = pseudouridine(55) in tRNA. Its function is as follows. Responsible for synthesis of pseudouridine from uracil-55 in the psi GC loop of transfer RNAs. The polypeptide is tRNA pseudouridine synthase B (Pseudoalteromonas translucida (strain TAC 125)).